The chain runs to 383 residues: Mating-type protein MAT-1 (383 aa).

The alpha box DNA-binding region spans 60–117; that stretch reads KARKALNAFVGFRCYYVTIPMFKSWPMKKLSNLIGLLWEADPNKSLWSLMAKAWSTIR.

Belongs to the MATALPHA1 family.

The protein localises to the nucleus. Its function is as follows. Mating type proteins are sequence specific DNA-binding proteins that act as master switches in fungal differentiation by controlling gene expression in a cell type-specific fashion. Transcriptional activator that induces the transcription of alpha-specific genes. In Cochliobolus heterostrophus (Southern corn leaf blight fungus), this protein is Mating-type protein MAT-1 (MAT1).